Consider the following 822-residue polypeptide: AP-1 complex subunit gamma-1 (822 aa).

Residues 593–604 show a composition bias toward polar residues; that stretch reads NGPSEIVQTNGE. The segment at 593–627 is disordered; that stretch reads NGPSEIVQTNGETEPAPLETKPPPSGPQPTSQAND. The region spanning 702 to 817 is the GAE domain; it reads PGIPSITAYS…QDLAEVNNFP (116 aa).

The protein belongs to the adaptor complexes large subunit family. In terms of assembly, adaptor protein complex 1 (AP-1) is a heterotetramer composed of two large adaptins (gamma-type subunit AP1G1 and beta-type subunit AP1B1), a medium adaptin (mu-type subunit AP1M1 or AP1M2) and a small adaptin (sigma-type subunit AP1S1 or AP1S2 or AP1S3). Interacts (via GAE domain) with RABEP1. Interacts with EPS15. Interacts with SYNRG/gamma-synergin. Interacts (via GAE domain) with AP1AR (via coiled-coil domain). Interacts with CLN3 (via dileucine motif); this interaction facilitates lysosomal targeting. Interacts (via GAE domain) with AFTPH/aftiphilin; the interaction is required to recruit AFTPH/aftiphilin to the perinuclear region of the cell. In terms of tissue distribution, widely expressed.

It is found in the golgi apparatus. The protein resides in the cytoplasmic vesicle. The protein localises to the clathrin-coated vesicle membrane. It localises to the cytoplasm. Its subcellular location is the perinuclear region. It is found in the clathrin-coated vesicle. The protein resides in the membrane. The protein localises to the clathrin-coated pit. Functionally, subunit of clathrin-associated adaptor protein complex 1 that plays a role in protein sorting in the late-Golgi/trans-Golgi network (TGN) and/or endosomes. The AP complexes mediate both the recruitment of clathrin to membranes and the recognition of sorting signals within the cytosolic tails of transmembrane cargo molecules. In association with AFTPH/aftiphilin in the aftiphilin/p200/gamma-synergin complex, involved in the trafficking of transferrin from early to recycling endosomes, and the membrane trafficking of furin and the lysosomal enzyme cathepsin D between the trans-Golgi network (TGN) and endosomes. This Mus musculus (Mouse) protein is AP-1 complex subunit gamma-1 (Ap1g1).